A 691-amino-acid polypeptide reads, in one-letter code: ATP-dependent zinc metalloprotease FtsH 2 (691 aa).

Residues 1–48 form a disordered region; sequence MTDEPQSDEQQTTEQERPLGTKRATRADGLRRPGVRSGLAERRSPAAD. Residues 1-64 are Cytoplasmic-facing; that stretch reads MTDEPQSDEQ…AAVRRFLLRD (64 aa). Over residues 14 to 31 the composition is skewed to basic and acidic residues; that stretch reads EQERPLGTKRATRADGLR. The chain crosses the membrane as a helical span at residues 65–85; sequence VFALGLMIAALVIVILFFTLL. At 86 to 168 the chain is on the extracellular side; that stretch reads GATKPTSSGT…AVKQQPGKAQ (83 aa). The helical transmembrane segment at 169 to 189 threads the bilayer; it reads VTIVVQFLLPILLLVCLFALF. The Cytoplasmic portion of the chain corresponds to 190–691; it reads MRIGQDGGAG…ERGSARDRDA (502 aa). 265–272 serves as a coordination point for ATP; sequence GPPGTGKT. Histidine 486 contributes to the Zn(2+) binding site. The active site involves glutamate 487. Residues histidine 490 and aspartate 563 each contribute to the Zn(2+) site.

In the central section; belongs to the AAA ATPase family. It in the C-terminal section; belongs to the peptidase M41 family. Homohexamer. Zn(2+) is required as a cofactor.

The protein resides in the cell membrane. Acts as a processive, ATP-dependent zinc metallopeptidase for both cytoplasmic and membrane proteins. Plays a role in the quality control of integral membrane proteins. This is ATP-dependent zinc metalloprotease FtsH 2 from Conexibacter woesei (strain DSM 14684 / CCUG 47730 / CIP 108061 / JCM 11494 / NBRC 100937 / ID131577).